The sequence spans 229 residues: MIITIDGPAGAGKSSIARRVASELGFEFLDTGAMYRAVTWGVMQQGIAWDDVESLVEFADAAQLIWQDDRIYLDNQDISEEIRTPQVTSHIRYLADPPRIRERITAQQRRIATGRDIVTEGRDQGTEVFPDAHCKIFLTASPEERARRRQRQLAENGRVMSVEEILAAQNQRDLEDRMRPVGRLRAASDAIVVQTDGMSPDEVREEVLRLVRECVQASAANSASSDVTR.

7–15 (GPAGAGKSS) serves as a coordination point for ATP.

It belongs to the cytidylate kinase family. Type 1 subfamily.

The protein localises to the cytoplasm. It carries out the reaction CMP + ATP = CDP + ADP. The enzyme catalyses dCMP + ATP = dCDP + ADP. This chain is Cytidylate kinase, found in Rhodopirellula baltica (strain DSM 10527 / NCIMB 13988 / SH1).